The chain runs to 401 residues: N-acetyllactosaminide beta-1,6-N-acetylglucosaminyl-transferase (401 aa).

At 1–7 (MPPSVRY) the chain is on the cytoplasmic side. The helical; Signal-anchor for type II membrane protein transmembrane segment at 8–28 (FFIVSVTTVIVFIVLYVLSFG) threads the bilayer. Residues 29–401 (GDQSYQKLNI…EIAIQPSWYF (373 aa)) lie on the Lumenal side of the membrane. Residues Asn37, Asn255, Asn315, and Asn389 are each glycosylated (N-linked (GlcNAc...) asparagine).

The protein belongs to the glycosyltransferase 14 family.

It is found in the golgi apparatus membrane. The catalysed reaction is a beta-D-Gal-(1-&gt;4)-beta-D-GlcNAc-(1-&gt;3)-beta-D-Gal-(1-&gt;4)-beta-D-GlcNAc derivative + UDP-N-acetyl-alpha-D-glucosamine = a beta-D-Gal-(1-&gt;4)-beta-D-GlcNAc-(1-&gt;3)-[beta-D-GlcNAc-(1-&gt;6)]-beta-D-Gal-(1-&gt;4)-N-acetyl-beta-D-glucosaminyl derivative + UDP + H(+). It participates in protein modification; protein glycosylation. Branching enzyme that converts linear into branched poly-N-acetyllactosaminoglycans. Introduces the blood group I antigen during embryonic development. It is closely associated with the development and maturation of erythroid cells. The sequence is that of N-acetyllactosaminide beta-1,6-N-acetylglucosaminyl-transferase (Gcnt2) from Mus musculus (Mouse).